Here is an 852-residue protein sequence, read N- to C-terminus: DNA repair protein rhp54 (852 aa).

2 consecutive short sequence motifs (nuclear localization signal) follow at residues 35-51 and 178-181; these read KKFKCPSLVISEKRKEL and KRKK. A compositionally biased stretch (basic and acidic residues) spans 187–205; it reads NRKGKKEISDSEPESDHDS. The disordered stretch occupies residues 187-208; the sequence is NRKGKKEISDSEPESDHDSCVS. The 179-residue stretch at 281–459 folds into the Helicase ATP-binding domain; sequence GRIDRCANGC…FSLLNFANPG (179 aa). 294–301 contributes to the ATP binding site; sequence DEMGLGKT. The DEGH box signature appears at 410–413; it reads DEGH. Residues 614–767 enclose the Helicase C-terminal domain; that stretch reads VLERMLYQIK…CVVDEAQDVE (154 aa).

The protein belongs to the SNF2/RAD54 helicase family. Homohexamer. Interacts with rhp51.

The protein resides in the nucleus. It catalyses the reaction ATP + H2O = ADP + phosphate + H(+). Functionally, plays an essential role in homologous recombination (HR) which is a major pathway for repairing DNA double-strand breaks (DSBs), single-stranded DNA (ssDNA) gaps, and stalled or collapsed replication forks. Acts as a molecular motor during the homology search and guides RAD51 ssDNA along a donor dsDNA thereby changing the homology search from the diffusion-based mechanism to a motor-guided mechanism. Plays also an essential role in RAD51-mediated synaptic complex formation which consists of three strands encased in a protein filament formed once homology is recognized. Once DNA strand exchange occured, dissociates RAD51 from nucleoprotein filaments formed on dsDNA. This is DNA repair protein rhp54 (rhp54) from Schizosaccharomyces pombe (strain 972 / ATCC 24843) (Fission yeast).